The primary structure comprises 875 residues: Valine--tRNA ligase (875 aa).

The 'HIGH' region signature appears at 45 to 55 (PNVTGVLHMGH). Positions 524-528 (KMSKS) match the 'KMSKS' region motif. K527 lines the ATP pocket. Residues 803–837 (VKLLIDKTKELIRLEKQLEKYKMLKISVSKKLENE) are a coiled coil.

It belongs to the class-I aminoacyl-tRNA synthetase family. ValS type 1 subfamily. In terms of assembly, monomer.

The protein resides in the cytoplasm. The enzyme catalyses tRNA(Val) + L-valine + ATP = L-valyl-tRNA(Val) + AMP + diphosphate. Functionally, catalyzes the attachment of valine to tRNA(Val). As ValRS can inadvertently accommodate and process structurally similar amino acids such as threonine, to avoid such errors, it has a 'posttransfer' editing activity that hydrolyzes mischarged Thr-tRNA(Val) in a tRNA-dependent manner. The protein is Valine--tRNA ligase of Borrelia garinii subsp. bavariensis (strain ATCC BAA-2496 / DSM 23469 / PBi) (Borreliella bavariensis).